A 424-amino-acid chain; its full sequence is Tyrosine--tRNA ligase (424 aa).

L-tyrosine is bound at residue Tyr37. A 'HIGH' region motif is present at residues 42-51 (PTADSLHLGH). Tyr175 and Gln179 together coordinate L-tyrosine. The 'KMSKS' region motif lies at 235 to 239 (KFGKT). Residue Lys238 coordinates ATP. Residues 357–414 (ADLMQALVDAELQPSRGQARKTIASNAVTINGEKQSDPEYIFNDEDRLFGRYTLLRRG) enclose the S4 RNA-binding domain.

Belongs to the class-I aminoacyl-tRNA synthetase family. TyrS type 1 subfamily. Homodimer.

The protein resides in the cytoplasm. The catalysed reaction is tRNA(Tyr) + L-tyrosine + ATP = L-tyrosyl-tRNA(Tyr) + AMP + diphosphate + H(+). Functionally, catalyzes the attachment of tyrosine to tRNA(Tyr) in a two-step reaction: tyrosine is first activated by ATP to form Tyr-AMP and then transferred to the acceptor end of tRNA(Tyr). This is Tyrosine--tRNA ligase from Salmonella enteritidis PT4 (strain P125109).